We begin with the raw amino-acid sequence, 217 residues long: Large ribosomal subunit protein uL4c (217 aa).

The segment at 51–85 is disordered; the sequence is HRNRNAHTQTRGEVSGGGRKPWKQKGTGRARAGSN.

This sequence belongs to the universal ribosomal protein uL4 family. In terms of assembly, part of the 50S ribosomal subunit.

The protein localises to the plastid. Its subcellular location is the chloroplast. In terms of biological role, probably binds the 23S rRNA. The sequence is that of Large ribosomal subunit protein uL4c (rpl4) from Gracilaria tenuistipitata var. liui (Red alga).